Consider the following 602-residue polypeptide: ATP-dependent DNA helicase XPD (602 aa).

A Helicase ATP-binding domain is found at 1–247; that stretch reads MQKSYGVALE…DLIEMIRSAL (247 aa). 11 to 18 is an ATP binding site; it reads SPTGSGKT. [4Fe-4S] cluster-binding residues include C74, C95, C110, and C146. The short motif at 193–196 is the DEAH box element; that stretch reads DEAH. Positions 421–602 constitute a Helicase C-terminal domain; sequence VIEDIILKVK…SAQAREKYGA (182 aa). SsDNA is bound by residues W531 and R566.

Belongs to the helicase family. RAD3/XPD subfamily. In terms of assembly, monomer. [4Fe-4S] cluster is required as a cofactor.

The catalysed reaction is Couples ATP hydrolysis with the unwinding of duplex DNA at the replication fork by translocating in the 5'-3' direction. This creates two antiparallel DNA single strands (ssDNA). The leading ssDNA polymer is the template for DNA polymerase III holoenzyme which synthesizes a continuous strand.. It catalyses the reaction ATP + H2O = ADP + phosphate + H(+). Its function is as follows. ATP-dependent 5'-3' DNA helicase. Thought to be involved in nucleotide excision repair (NER) of DNA. The protein is ATP-dependent DNA helicase XPD of Thermoplasma acidophilum (strain ATCC 25905 / DSM 1728 / JCM 9062 / NBRC 15155 / AMRC-C165).